Here is an 85-residue protein sequence, read N- to C-terminus: MAHKKAGGSTRNGRDSESKRLGVKMYGSQVVKAGNIIVRQRGTQFHAGYGVGMGKDHTLFAKIEGVIKFEKKGEFNRRYVSIVAA.

The interval 1–21 (MAHKKAGGSTRNGRDSESKRL) is disordered.

It belongs to the bacterial ribosomal protein bL27 family.

The sequence is that of Large ribosomal subunit protein bL27 from Pseudomonas putida (strain W619).